The primary structure comprises 80 residues: U19-lycotoxin-Ls1a (80 aa).

The first 22 residues, 1–22 (MSPKVQALIFIVGLITLLAAHA), serve as a signal peptide directing secretion. Residues 23-34 (QEELSDNTESER) constitute a propeptide that is removed on maturation. Intrachain disulfides connect C36–C50, C43–C55, C49–C66, and C57–C64.

Belongs to the neurotoxin 02 (plectoxin) family. 05 (U19-lycotoxin) subfamily. Expressed by the venom gland.

Its subcellular location is the secreted. The sequence is that of U19-lycotoxin-Ls1a from Lycosa singoriensis (Wolf spider).